A 130-amino-acid polypeptide reads, in one-letter code: UPF0225 protein CE1570 (130 aa).

It belongs to the UPF0225 family.

This is UPF0225 protein CE1570 from Corynebacterium efficiens (strain DSM 44549 / YS-314 / AJ 12310 / JCM 11189 / NBRC 100395).